Consider the following 428-residue polypeptide: tRNA modification GTPase MnmE (428 aa).

Residues Arg-20, Glu-76, and Arg-116 each contribute to the (6S)-5-formyl-5,6,7,8-tetrahydrofolate site. In terms of domain architecture, TrmE-type G spans 212 to 351 (GFEVAIIGAP…LVEALQDRLL (140 aa)). Position 222 (Asn-222) interacts with K(+). GTP is bound by residues 222–227 (NAGKST), 241–247 (SEVAGTT), and 266–269 (DTAG). Position 226 (Ser-226) interacts with Mg(2+). K(+) is bound by residues Ser-241, Val-243, and Thr-246. Thr-247 contributes to the Mg(2+) binding site. Lys-428 serves as a coordination point for (6S)-5-formyl-5,6,7,8-tetrahydrofolate.

It belongs to the TRAFAC class TrmE-Era-EngA-EngB-Septin-like GTPase superfamily. TrmE GTPase family. Homodimer. Heterotetramer of two MnmE and two MnmG subunits. Requires K(+) as cofactor.

It localises to the cytoplasm. Functionally, exhibits a very high intrinsic GTPase hydrolysis rate. Involved in the addition of a carboxymethylaminomethyl (cmnm) group at the wobble position (U34) of certain tRNAs, forming tRNA-cmnm(5)s(2)U34. The protein is tRNA modification GTPase MnmE of Cereibacter sphaeroides (strain ATCC 17025 / ATH 2.4.3) (Rhodobacter sphaeroides).